Reading from the N-terminus, the 1017-residue chain is DNA polymerase (1017 aa).

This sequence belongs to the DNA polymerase type-B family. Heterodimer with the terminal protein; this heterodimer binds to bp 9 to 18 of the genome. Forms a complex with viral pTP, DBP and hosts NFIA and POU2F1/OCT1 for initiation of replication.

It localises to the host nucleus. It catalyses the reaction DNA(n) + a 2'-deoxyribonucleoside 5'-triphosphate = DNA(n+1) + diphosphate. Functionally, eukaryotic-type DNA polymerase involved in viral genomic replication. DNA synthesis is protein primed, and acts in a strand displacement replication. Assembles in complex with viral pTP, DBP, host NFIA and host POU2F1/OCT1 on viral origin of replication. The polymerase covalently transfers dCMP onto pTP, thereby initiating complementary strand synthesis. In Bovine adenovirus 2 (BAdV-2), this protein is DNA polymerase.